The sequence spans 298 residues: Small ribosomal subunit protein uS2 (298 aa).

The disordered stretch occupies residues 272 to 298 (EGGDWAASSAAPAGESWAEAQPTEAKW).

The protein belongs to the universal ribosomal protein uS2 family. As to quaternary structure, component of the small ribosomal subunit. Mature ribosomes consist of a small (40S) and a large (60S) subunit. The 40S subunit contains about 33 different proteins and 1 molecule of RNA (18S). The 60S subunit contains about 49 different proteins and 3 molecules of RNA (25S, 5.8S and 5S). Interacts with rps21.

The protein resides in the cytoplasm. Its function is as follows. Required for the assembly and/or stability of the 40S ribosomal subunit. Required for the processing of the 20S rRNA-precursor to mature 18S rRNA in a late step of the maturation of 40S ribosomal subunits. The polypeptide is Small ribosomal subunit protein uS2 (rps0) (Aspergillus niger (strain ATCC MYA-4892 / CBS 513.88 / FGSC A1513)).